The primary structure comprises 261 residues: Cytochrome c oxidase subunit 3 (261 aa).

At 1–15 (MAHQAHAYHMVDPSP) the chain is on the mitochondrial matrix side. Residues 16–34 (WPLTGAIGALFLTSGLAIW) traverse the membrane as a helical segment. Residues 35–40 (FHFQSV) lie on the Mitochondrial intermembrane side of the membrane. A helical membrane pass occupies residues 41-66 (TLLTLGLILLLLTMYQWWRDIIREGT). Residues 67–72 (FQGHHT) are Mitochondrial matrix-facing. Residues 73–105 (PPVQKGLRYGMILFITSEVFFFLGFFWAFYHSS) traverse the membrane as a helical segment. At 106 to 128 (LAPTPELGGCWPPTGITPLDPFE) the chain is on the mitochondrial intermembrane side. The chain crosses the membrane as a helical span at residues 129–152 (VPLLNTAVLLASGVTVTWAHHSLM). At 153-155 (EGA) the chain is on the mitochondrial matrix side. A helical transmembrane segment spans residues 156–183 (RKQAIQALALTIILGVYFTALQAMEYYE). Over 184 to 190 (APFTIAD) the chain is Mitochondrial intermembrane. The helical transmembrane segment at 191–223 (GVYGSTFFVATGFHGLHVIIGSSFLAVCLLRQI) threads the bilayer. Residues 224–232 (QYHFTSEHH) are Mitochondrial matrix-facing. A helical transmembrane segment spans residues 233-256 (FGFEAAAWYWHFVDVVWLFLYVSI). Residues 257 to 261 (YWWGS) lie on the Mitochondrial intermembrane side of the membrane.

The protein belongs to the cytochrome c oxidase subunit 3 family. Component of the cytochrome c oxidase (complex IV, CIV), a multisubunit enzyme composed of 14 subunits. The complex is composed of a catalytic core of 3 subunits MT-CO1, MT-CO2 and MT-CO3, encoded in the mitochondrial DNA, and 11 supernumerary subunits COX4I, COX5A, COX5B, COX6A, COX6B, COX6C, COX7A, COX7B, COX7C, COX8 and NDUFA4, which are encoded in the nuclear genome. The complex exists as a monomer or a dimer and forms supercomplexes (SCs) in the inner mitochondrial membrane with NADH-ubiquinone oxidoreductase (complex I, CI) and ubiquinol-cytochrome c oxidoreductase (cytochrome b-c1 complex, complex III, CIII), resulting in different assemblies (supercomplex SCI(1)III(2)IV(1) and megacomplex MCI(2)III(2)IV(2)).

The protein localises to the mitochondrion inner membrane. It carries out the reaction 4 Fe(II)-[cytochrome c] + O2 + 8 H(+)(in) = 4 Fe(III)-[cytochrome c] + 2 H2O + 4 H(+)(out). Its function is as follows. Component of the cytochrome c oxidase, the last enzyme in the mitochondrial electron transport chain which drives oxidative phosphorylation. The respiratory chain contains 3 multisubunit complexes succinate dehydrogenase (complex II, CII), ubiquinol-cytochrome c oxidoreductase (cytochrome b-c1 complex, complex III, CIII) and cytochrome c oxidase (complex IV, CIV), that cooperate to transfer electrons derived from NADH and succinate to molecular oxygen, creating an electrochemical gradient over the inner membrane that drives transmembrane transport and the ATP synthase. Cytochrome c oxidase is the component of the respiratory chain that catalyzes the reduction of oxygen to water. Electrons originating from reduced cytochrome c in the intermembrane space (IMS) are transferred via the dinuclear copper A center (CU(A)) of subunit 2 and heme A of subunit 1 to the active site in subunit 1, a binuclear center (BNC) formed by heme A3 and copper B (CU(B)). The BNC reduces molecular oxygen to 2 water molecules using 4 electrons from cytochrome c in the IMS and 4 protons from the mitochondrial matrix. The chain is Cytochrome c oxidase subunit 3 (mt-co3) from Formosania lacustris (Oriental stream loach).